Consider the following 113-residue polypeptide: UPF0102 protein SUN_0231 (113 aa).

It belongs to the UPF0102 family.

The polypeptide is UPF0102 protein SUN_0231 (Sulfurovum sp. (strain NBC37-1)).